A 523-amino-acid polypeptide reads, in one-letter code: Ubiquilin (523 aa).

The Ubiquitin-like domain maps to V2–P77. The tract at residues L70–G99 is disordered. STI1 domains follow at residues V100–M135 and N139–M178. Over residues N215–N227 the composition is skewed to low complexity. A disordered region spans residues N215 to G325. Positions P228–P241 are enriched in polar residues. Over residues P245–N278 the composition is skewed to low complexity. Residues S285–N296 show a composition bias toward gly residues. Low complexity predominate over residues N297–G310. 2 STI1 domains span residues D339 to M380 and N383 to M415. A UBA domain is found at P480–R523.

Stable protein which acts as an antagonist of nosA by repressing cellular differentiation after the tight-aggregate stage, when cells differentiate into two precursor cell types, prespore and prestalk cells, prior to the formation of fruiting bodies. The chain is Ubiquilin (ubqln) from Dictyostelium discoideum (Social amoeba).